Consider the following 100-residue polypeptide: CCAAT/enhancer-binding protein homolog 2 (100 aa).

2 disordered regions span residues 1–60 (MSGN…ETLE) and 79–100 (AYAK…SSAV). The bZIP domain maps to 17-80 (EDDYSTKRKR…SFLKEMFMAY (64 aa)). The tract at residues 23-48 (KRKRNNEAVNRTRQKKRQEENDTAEK) is basic motif. The stretch at 24 to 83 (RKRNNEAVNRTRQKKRQEENDTAEKVDELKKENETLERKVEQLQKELSFLKEMFMAYAKN) forms a coiled coil. Positions 39-60 (RQEENDTAEKVDELKKENETLE) are enriched in basic and acidic residues. The segment at 52 to 73 (LKKENETLERKVEQLQKELSFL) is leucine-zipper. Positions 88 to 100 (GPPPPPPPSSSAV) are enriched in pro residues.

It belongs to the bZIP family. C/EBP subfamily. In terms of assembly, interacts with transcription factor zip-11. Expressed broadly in somatic tissues including the intestine.

It localises to the nucleus. Its function is as follows. Transcription factor that binds to the promoter and the enhancer regions of target genes. Regulates expression of genes involved in fat metabolism, including ech-1.1 and fat-5. Has a protective role in response to infection by the Gram-negative bacterium P.aeruginosa. Required for the activation of infection response gene irg-1 following P.aeruginosa infection. Required to prevent P.aeruginosa ToxA-mediated lethality. May also function in concert with transcription factor zip-11 to mediate immune responses, independently of the pmk-1/p38 MAPK pathway. May act together with the bZIP transcription factor, zip-2. The chain is CCAAT/enhancer-binding protein homolog 2 from Caenorhabditis elegans.